Consider the following 450-residue polypeptide: Zinc finger protein 446 (450 aa).

Positions Arg-26–Pro-108 constitute an SCAN box domain. A Glycyl lysine isopeptide (Lys-Gly) (interchain with G-Cter in SUMO2) cross-link involves residue Lys-130. 2 disordered regions span residues Lys-130–Arg-155 and Glu-168–Pro-205. A Phosphoserine modification is found at Ser-137. One can recognise a KRAB domain in the interval Ile-208–Met-254. Ser-218 is subject to Phosphoserine. Disordered stretches follow at residues Arg-263 to Pro-331 and His-354 to Leu-389. Over residues Pro-275–Pro-286 the composition is skewed to pro residues. Low complexity predominate over residues Gly-287 to Pro-306. Position 308 is a phosphothreonine (Thr-308). Lys-330 participates in a covalent cross-link: Glycyl lysine isopeptide (Lys-Gly) (interchain with G-Cter in SUMO2). C2H2-type zinc fingers lie at residues Tyr-332 to Gly-359, Tyr-395 to Arg-422, and His-423 to Pro-450.

It belongs to the krueppel C2H2-type zinc-finger protein family.

Its subcellular location is the nucleus. May be involved in transcriptional regulation. The protein is Zinc finger protein 446 (ZNF446) of Homo sapiens (Human).